The following is a 201-amino-acid chain: GTP cyclohydrolase 1 (201 aa).

Zn(2+) contacts are provided by C90, H93, and C163.

It belongs to the GTP cyclohydrolase I family. As to quaternary structure, toroid-shaped homodecamer, composed of two pentamers of five dimers.

The catalysed reaction is GTP + H2O = 7,8-dihydroneopterin 3'-triphosphate + formate + H(+). The protein operates within cofactor biosynthesis; 7,8-dihydroneopterin triphosphate biosynthesis; 7,8-dihydroneopterin triphosphate from GTP: step 1/1. This chain is GTP cyclohydrolase 1, found in Streptomyces avermitilis (strain ATCC 31267 / DSM 46492 / JCM 5070 / NBRC 14893 / NCIMB 12804 / NRRL 8165 / MA-4680).